A 374-amino-acid polypeptide reads, in one-letter code: Aminomethyltransferase (374 aa).

This sequence belongs to the GcvT family. In terms of assembly, the glycine cleavage system is composed of four proteins: P, T, L and H.

It catalyses the reaction N(6)-[(R)-S(8)-aminomethyldihydrolipoyl]-L-lysyl-[protein] + (6S)-5,6,7,8-tetrahydrofolate = N(6)-[(R)-dihydrolipoyl]-L-lysyl-[protein] + (6R)-5,10-methylene-5,6,7,8-tetrahydrofolate + NH4(+). Functionally, the glycine cleavage system catalyzes the degradation of glycine. This Caldanaerobacter subterraneus subsp. tengcongensis (strain DSM 15242 / JCM 11007 / NBRC 100824 / MB4) (Thermoanaerobacter tengcongensis) protein is Aminomethyltransferase.